The following is a 54-amino-acid chain: Large ribosomal subunit protein bL32c (54 aa).

Belongs to the bacterial ribosomal protein bL32 family.

The protein resides in the plastid. It localises to the chloroplast. This is Large ribosomal subunit protein bL32c from Helianthus annuus (Common sunflower).